The chain runs to 223 residues: Proteinase inhibitor type-2 TR8 (223 aa).

The first 24 residues, 1–24, serve as a signal peptide directing secretion; sequence MAIYKVALLLLFGMILLASDFEHA. 3 tandem repeats follow at residues 24 to 81, 88 to 145, and 152 to 209. Intrachain disulfides connect Cys-27–Cys-120, Cys-31–Cys-116, Cys-40–Cys-126, Cys-52–Cys-95, Cys-55–Cys-73, Cys-56–Cys-91, Cys-62–Cys-104, and Cys-119–Cys-137.

Belongs to the protease inhibitor I20 (potato type II proteinase inhibitor) family.

The sequence is that of Proteinase inhibitor type-2 TR8 (ARPI) from Solanum lycopersicum (Tomato).